The chain runs to 79 residues: Dolichol phosphate-mannose biosynthesis regulatory protein (79 aa).

2 helical membrane passes run 8–28 and 50–70; these read IGFV…TWVI and IIIP…FLGL.

This sequence belongs to the DPM2 family. Component of the dolichol-phosphate mannose (DPM) synthase complex composed of dpm1, dpm2 and dpm3.

Its subcellular location is the endoplasmic reticulum membrane. It participates in protein modification; protein glycosylation. In terms of biological role, regulates the biosynthesis of dolichol phosphate-mannose. Regulatory subunit of the dolichol-phosphate mannose (DPM) synthase complex; essential for the ER localization and stable expression of dpm1. The polypeptide is Dolichol phosphate-mannose biosynthesis regulatory protein (dpm2-1) (Dictyostelium discoideum (Social amoeba)).